Here is a 319-residue protein sequence, read N- to C-terminus: Acetyl-coenzyme A carboxylase carboxyl transferase subunit alpha (319 aa).

The CoA carboxyltransferase C-terminal domain occupies N32–A293.

This sequence belongs to the AccA family. As to quaternary structure, acetyl-CoA carboxylase is a heterohexamer composed of biotin carboxyl carrier protein (AccB), biotin carboxylase (AccC) and two subunits each of ACCase subunit alpha (AccA) and ACCase subunit beta (AccD).

It localises to the cytoplasm. It catalyses the reaction N(6)-carboxybiotinyl-L-lysyl-[protein] + acetyl-CoA = N(6)-biotinyl-L-lysyl-[protein] + malonyl-CoA. It participates in lipid metabolism; malonyl-CoA biosynthesis; malonyl-CoA from acetyl-CoA: step 1/1. Its function is as follows. Component of the acetyl coenzyme A carboxylase (ACC) complex. First, biotin carboxylase catalyzes the carboxylation of biotin on its carrier protein (BCCP) and then the CO(2) group is transferred by the carboxyltransferase to acetyl-CoA to form malonyl-CoA. This is Acetyl-coenzyme A carboxylase carboxyl transferase subunit alpha from Xylella fastidiosa (strain 9a5c).